We begin with the raw amino-acid sequence, 1076 residues long: Ribosome quality control complex subunit NEMF (1076 aa).

Thr-7 bears the Phosphothreonine mark. The stretch at 296–359 forms a coiled coil; that stretch reads VDEFYSKIEG…LIEMNLQIVD (64 aa). Ser-417 carries the post-translational modification Phosphoserine. Residues 420–453 are disordered; the sequence is EDDDVDGDVNVEKNETEPPKGKKKKQKNKQLQKP. The span at 429–439 shows a compositional bias: basic and acidic residues; it reads NVEKNETEPPK. Positions 440–449 are enriched in basic residues; that stretch reads GKKKKQKNKQ. A coiled-coil region spans residues 483 to 514; that stretch reads AAKKTQKTVEAAEKAFKSAEKKTKQTLKEVQT. Acidic residues-rich tracts occupy residues 691-710 and 742-754; these read ISEE…EDKE and LIQE…EGEY. Disordered regions lie at residues 691–715 and 742–972; these read ISEE…HETP and LIQE…DLDQ. Phosphoserine occurs at positions 747, 748, and 763. Residues 755 to 768 show a composition bias toward basic and acidic residues; sequence EEVRKDQDSVGEMK. Positions 777-795 are enriched in polar residues; sequence YPDTTIDLSHLQPQRSIQK. At Ser-831 the chain carries Phosphoserine. Residues 839–854 are compositionally biased toward basic and acidic residues; it reads LEGKDKEKESTVHIET. The stretch at 869–894 forms a coiled coil; sequence KRGQKSKMKKMKEKYKDQDEEDRELI. The segment covering 870–881 has biased composition (basic residues); sequence RGQKSKMKKMKE. The span at 937 to 965 shows a compositional bias: basic and acidic residues; it reads DNIKKETPFLEVITHELQDFAVDDPHDDK.

This sequence belongs to the NEMF family. Component of the ribosome quality control complex (RQC), composed of the E3 ubiquitin ligase LTN1, TCF25 and NEMF associated with the 60S ribosomal subunit. The complex probably also contains VCP/p97 and its ubiquitin-binding cofactors. Interacts (via its N-terminus) with XPO1. In terms of tissue distribution, expressed in brain, heart, liver, lung, spleen, and skeletal muscle. Also expressed at lower levels in stomach and testis.

It is found in the cytoplasm. Its subcellular location is the cytosol. The protein localises to the nucleus. In terms of biological role, key component of the ribosome quality control complex (RQC), a ribosome-associated complex that mediates the extraction of incompletely synthesized nascent chains from stalled ribosomes as well as their ubiquitin-mediated proteasomal degradation. Thereby, frees 60S subunit ribosomes from the stalled translation complex and prevents the accumulation of nascent polypeptide chains that are potentially toxic for the cell. Within the RQC complex, NEMF specifically binds stalled 60S ribosomal subunits by recognizing an exposed, nascent chain-conjugated tRNA moiety and promotes the recruitment of LTN1 to stalled 60S subunits. Following binding to stalled 60S ribosomal subunits, NEMF mediates CAT tailing by recruiting alanine-charged tRNA to the A-site and directing the elongation of stalled nascent chains independently of mRNA or 40S subunits, leading to non-templated C-terminal alanine extensions (CAT tails). Mainly recruits alanine-charged tRNAs, but can also other amino acid-charged tRNAs. CAT tailing is required to promote ubiquitination of stalled nascent chains by different E3 ubiquitin-protein ligases. In the canonical RQC pathway (RQC-L), CAT tailing facilitates LTN1-dependent ubiquitination by exposing lysine residues that would otherwise remain buried in the ribosomal exit tunnel. In the alternative RQC pathway (RQC-C) CAT tailing creates an C-degron mainly composed of alanine that is recognized by the CRL2(KLHDC10) and RCHY1/PIRH2 E3 ligases, leading to ubiquitination and degradation of stalled nascent chains. NEMF may also indirectly play a role in nuclear export. In Homo sapiens (Human), this protein is Ribosome quality control complex subunit NEMF.